A 421-amino-acid polypeptide reads, in one-letter code: MKIQAPKGTKDVLPEESYMWQYVENKFREVCKLYGYQEVRFPTFEYTELFQRGVGDTTDIVQKEMYTFLDKGGRSITLRPEGTASTARLFIEHGFASRPMPQRFYYIISAFRYENTQGGRFREFHQFGIENFGSSSPVTDAEVISLAYNFFTSLGLDNITVNINSIGCPVCRKEYVKNLKEYFSANSQKLCHTCHQRLDKNPMRILDCKEEGCKLITKDAPKPIDYLCDDCKSHFESVKTYLDSAMVSYKVDPFIVRGLDYYTKTVFEIVATVSDKELAICGGGRYDNLIEQIGGPSIAGIGFAIGVERLLMLLEQNGLLPARSQVPRVFVATIGENGIKKAFEIARMLRFEGISTVVEEMGRSLKSQMKYADKIGCEFSIIIGDDEIEKGVCKVRNMKTSSEEIVEIENICEYLKEKLQK.

Belongs to the class-II aminoacyl-tRNA synthetase family. As to quaternary structure, homodimer.

It localises to the cytoplasm. The enzyme catalyses tRNA(His) + L-histidine + ATP = L-histidyl-tRNA(His) + AMP + diphosphate + H(+). In Caldicellulosiruptor bescii (strain ATCC BAA-1888 / DSM 6725 / KCTC 15123 / Z-1320) (Anaerocellum thermophilum), this protein is Histidine--tRNA ligase.